We begin with the raw amino-acid sequence, 570 residues long: MATRPPLMPPANETESSVSRISREGKKITYKLSVMQQPERARACGAGAKSSADRRPVDPPPVVELRIFESDPNDDLHKTDITFAYNANFFLFATLETARPMAQGRLTGPPTCPVLTGVPVAGVAYLDRPQQAGYFIFPDLSVRHEGRYRLSFHLYEEIKDIKDADKDTPMPDLNSSTNLTKPSAPKAHLNFRLEVKSVPFTVYSAKKFPGLATSTSLSRIIAEQGCRVRIRRDVRMRRRGEKRTDDYDFDDERAFATRSDRYTTPDMYAANSAERARSTSISTTADTSFPYGSDAQRRPSAGDYGFQGAQPYQRSMPAASAAPAPAPVHSPATSAQTSSYQSHLSFGATQSQYPAPQLPPTPQSATPTNTYSPHPSYSHSRNPSNGTEYDATSSGYPYPQPRLPADRPSYSKAALPPLRLEPPKAPNMQTSTDSRSSDANAYPTLSQPPVPRAPTPANHVTSLPPLKVLSGEYSHPSQPNAQSPHHDLGSGKRLLWETNHTLSKRSHEETFGSDERPLHNGMRPDMDQYPSMGRKQPDYGRLPFYTDSRDEMAYKRANGRMVMKILPALP.

Disordered regions lie at residues 1-24, 39-60, 266-491, and 504-541; these read MATRPPLMPPANETESSVSRISRE, ERARACGAGAKSSADRRPVDPP, DMYA…LGSG, and KRSHEETFGSDERPLHNGMRPDMDQYPSMGRKQPDYGR. Residues 25–231 form the Velvet domain; that stretch reads GKKITYKLSV…AEQGCRVRIR (207 aa). The Nuclear localization signal motif lies at 39–44; the sequence is ERARAC. Residues 278–287 are compositionally biased toward polar residues; that stretch reads STSISTTADT. Over residues 315-335 the composition is skewed to low complexity; the sequence is SMPAASAAPAPAPVHSPATSA. Composition is skewed to polar residues over residues 336–354, 363–395, and 427–445; these read QTSSYQSHLSFGATQSQYP, QSATPTNTYSPHPSYSHSRNPSNGTEYDATSSG, and NMQTSTDSRSSDANAYPTL. Residues 454-493 are PEST; the sequence is PTPANHVTSLPPLKVLSGEYSHPSQPNAQSPHHDLGSGKR. Basic and acidic residues predominate over residues 505–526; sequence RSHEETFGSDERPLHNGMRPDM.

It belongs to the velvet family. VeA subfamily. Component of the heterotrimeric velvet complex composed of laeA, veA and velB; VeA acting as a bridging protein between laeA and velB.

It is found in the nucleus. It localises to the cytoplasm. Functionally, component of the velvet transcription factor complex that controls sexual/asexual developmental ratio in response to light, promoting sexual development in the darkness while stimulating asexual sporulation under illumination. The velvet complex hat acts as a global regulator for secondary metabolite gene expression. Controls the expression of hundreds of genes, including those comprising more than a dozen known secondary metabolite gene clusters. Controls the expression of the gliotoxin gene cluster. Controls the expression of the fumagillin, fumitremorgin G, fumigaclavine C and glionitrin gene clusters. The regulation of the fumagillin gene cluster and fumagillin production is performed through direct control of the expression of fumR. Negatively regulates conidiation. Required for normal protease activity. This Aspergillus fumigatus (strain ATCC MYA-4609 / CBS 101355 / FGSC A1100 / Af293) (Neosartorya fumigata) protein is Developmental and secondary metabolism regulator veA.